Here is a 337-residue protein sequence, read N- to C-terminus: MSGSPVKRQRMENALDQLKQFTTVVADTGDFHAIDEYKPQDATTNPSLILAAAQMPTYQELVEEAIAYGRKLGGSQEEQITNAIDKLFVLFGAEILKKIPGRVSTEVDARLSFDKDAMVARARRLIELYKEAGISKERILIKLSSTWEGIQAGKELEEHHGIRCNMTLLFSFAQAVACAEAGVTLISPFVGRILDWHVANTDKKSYETQEDPGVKSVTKIYNYYKKFGYKTIVMGASFRNTGEIKALAGCDFLTISPQLLGELLKDHSKLTPVLSAKAAQASDLEKIQLDEKAFRWLHNEDRMAVEKLSDGIRRFAADAVKLERMLRERMFSAENGK.

Lys-115 carries the N6-acetyllysine modification. Lys-142 acts as the Schiff-base intermediate with substrate in catalysis. At Lys-219 the chain carries N6-acetyllysine. A phosphoserine mark is found at Ser-237 and Ser-256. An N6-acetyllysine mark is found at Lys-269, Lys-286, and Lys-321.

This sequence belongs to the transaldolase family. Type 1 subfamily. As to quaternary structure, homodimer.

Its subcellular location is the cytoplasm. It catalyses the reaction D-sedoheptulose 7-phosphate + D-glyceraldehyde 3-phosphate = D-erythrose 4-phosphate + beta-D-fructose 6-phosphate. It functions in the pathway carbohydrate degradation; pentose phosphate pathway; D-glyceraldehyde 3-phosphate and beta-D-fructose 6-phosphate from D-ribose 5-phosphate and D-xylulose 5-phosphate (non-oxidative stage): step 2/3. Functionally, transaldolase is important for the balance of metabolites in the pentose-phosphate pathway. The sequence is that of Transaldolase (TALDO1) from Bos taurus (Bovine).